A 97-amino-acid chain; its full sequence is Aspartyl/glutamyl-tRNA(Asn/Gln) amidotransferase subunit C (97 aa).

Positions 59–78 are disordered; that stretch reads STGKLRPDEPAQPLSRDDAL. The segment covering 63 to 78 has biased composition (basic and acidic residues); the sequence is LRPDEPAQPLSRDDAL.

The protein belongs to the GatC family. Heterotrimer of A, B and C subunits.

The enzyme catalyses L-glutamyl-tRNA(Gln) + L-glutamine + ATP + H2O = L-glutaminyl-tRNA(Gln) + L-glutamate + ADP + phosphate + H(+). It carries out the reaction L-aspartyl-tRNA(Asn) + L-glutamine + ATP + H2O = L-asparaginyl-tRNA(Asn) + L-glutamate + ADP + phosphate + 2 H(+). In terms of biological role, allows the formation of correctly charged Asn-tRNA(Asn) or Gln-tRNA(Gln) through the transamidation of misacylated Asp-tRNA(Asn) or Glu-tRNA(Gln) in organisms which lack either or both of asparaginyl-tRNA or glutaminyl-tRNA synthetases. The reaction takes place in the presence of glutamine and ATP through an activated phospho-Asp-tRNA(Asn) or phospho-Glu-tRNA(Gln). The chain is Aspartyl/glutamyl-tRNA(Asn/Gln) amidotransferase subunit C from Metallosphaera sedula (strain ATCC 51363 / DSM 5348 / JCM 9185 / NBRC 15509 / TH2).